A 110-amino-acid polypeptide reads, in one-letter code: UPF0339 protein YegP (110 aa).

2 tandem repeats follow at residues Ser10–Lys58 and Ala61–Asn109.

Belongs to the UPF0339 family. Duplicated subfamily.

This Escherichia coli (strain K12) protein is UPF0339 protein YegP (yegP).